An 86-amino-acid polypeptide reads, in one-letter code: Bradykinin-potentiating peptide 25.12 (86 aa).

The N-terminal stretch at 1–22 is a signal peptide; sequence MNKRVLLVIFFVTLLIADEVNS. Residues 67–86 form a disordered region; that stretch reads APAAAAAPEEPPVEQRRRRR.

Belongs to the non-disulfide-bridged peptide (NDBP) superfamily. Long chain multifunctional peptide (group 2) family. As to expression, expressed by the venom gland.

The protein resides in the secreted. In terms of biological role, inhibits angiotensin-converting enzyme (ACE), but does not serve as substrate for the enzyme. Potentiates bradykinin (BK) on the isolated guinea pig ileum as well as the isolated rat uterus for contraction. Also potentiates in vivo the depressor effect of BK on arterial blood pressure in the normotensive anesthetized rat. The protein is Bradykinin-potentiating peptide 25.12 of Lychas mucronatus (Chinese swimming scorpion).